We begin with the raw amino-acid sequence, 197 residues long: dTTP/UTP pyrophosphatase (197 aa).

Aspartate 70 acts as the Proton acceptor in catalysis.

The protein belongs to the Maf family. YhdE subfamily. The cofactor is a divalent metal cation.

Its subcellular location is the cytoplasm. It carries out the reaction dTTP + H2O = dTMP + diphosphate + H(+). The enzyme catalyses UTP + H2O = UMP + diphosphate + H(+). Its function is as follows. Nucleoside triphosphate pyrophosphatase that hydrolyzes dTTP and UTP. May have a dual role in cell division arrest and in preventing the incorporation of modified nucleotides into cellular nucleic acids. This is dTTP/UTP pyrophosphatase from Methanosarcina barkeri (strain Fusaro / DSM 804).